A 436-amino-acid chain; its full sequence is Gamma-glutamyl phosphate reductase (436 aa).

The protein belongs to the gamma-glutamyl phosphate reductase family.

It is found in the cytoplasm. The enzyme catalyses L-glutamate 5-semialdehyde + phosphate + NADP(+) = L-glutamyl 5-phosphate + NADPH + H(+). The protein operates within amino-acid biosynthesis; L-proline biosynthesis; L-glutamate 5-semialdehyde from L-glutamate: step 2/2. Its function is as follows. Catalyzes the NADPH-dependent reduction of L-glutamate 5-phosphate into L-glutamate 5-semialdehyde and phosphate. The product spontaneously undergoes cyclization to form 1-pyrroline-5-carboxylate. The chain is Gamma-glutamyl phosphate reductase from Polaromonas sp. (strain JS666 / ATCC BAA-500).